The primary structure comprises 188 residues: Elongation factor P (188 aa).

It belongs to the elongation factor P family.

It localises to the cytoplasm. It participates in protein biosynthesis; polypeptide chain elongation. In terms of biological role, involved in peptide bond synthesis. Stimulates efficient translation and peptide-bond synthesis on native or reconstituted 70S ribosomes in vitro. Probably functions indirectly by altering the affinity of the ribosome for aminoacyl-tRNA, thus increasing their reactivity as acceptors for peptidyl transferase. This chain is Elongation factor P, found in Rickettsia bellii (strain OSU 85-389).